The following is a 172-amino-acid chain: General stress protein 18 (172 aa).

The PfpI endopeptidase domain maps to 3 to 171; the sequence is KKIAVVLTYY…FNRESLALLE (169 aa). Cysteine 104 acts as the Nucleophile in catalysis. Residue histidine 105 is part of the active site.

The protein belongs to the peptidase C56 family.

Its function is as follows. Functions in the protection against aldehyde-stress, possibly by degrading damaged proteins. The protein is General stress protein 18 (yfkM) of Bacillus subtilis (strain 168).